Here is a 165-residue protein sequence, read N- to C-terminus: Trypsin alpha-3 (165 aa).

The 163-residue stretch at 1-163 folds into the Peptidase S1 domain; that stretch reads NSGGVLVSVA…LRSWVVSAAN (163 aa). The active-site Charge relay system is Asp26. Intrachain disulfides connect Cys89–Cys106 and Cys115–Cys139. Ser119 functions as the Charge relay system in the catalytic mechanism.

It belongs to the peptidase S1 family.

It localises to the secreted. The protein resides in the extracellular space. It carries out the reaction Preferential cleavage: Arg-|-Xaa, Lys-|-Xaa.. This is Trypsin alpha-3 from Lucilia cuprina (Green bottle fly).